Consider the following 373-residue polypeptide: Dynein regulatory complex protein 9 (373 aa).

A coiled-coil region spans residues 145–200; the sequence is EQAMKETIEREKNTTAAVRQLRNDLREEKLDHEEKMKEKKKGLSTLKEQLKALKMD. Positions 336-365 constitute an IQ domain; that stretch reads RAQAAVIIQAWWRGHKVRMVMSGGGKKGAK.

This sequence belongs to the DRC9 family. As to quaternary structure, component of the nexin-dynein regulatory complex (N-DRC).

It is found in the cytoplasm. It localises to the cytoskeleton. The protein resides in the flagellum axoneme. Component of the nexin-dynein regulatory complex (N-DRC), a key regulator of ciliary/flagellar motility which maintains the alignment and integrity of the distal axoneme and regulates microtubule sliding in motile axonemes. In Chlamydomonas reinhardtii (Chlamydomonas smithii), this protein is Dynein regulatory complex protein 9.